Consider the following 197-residue polypeptide: Guanylate kinase (197 aa).

One can recognise a Guanylate kinase-like domain in the interval 7–185; that stretch reads GLIIILSSPS…TLKKIHEIIV (179 aa). 14 to 21 serves as a coordination point for ATP; sequence SPSGTGKS.

Belongs to the guanylate kinase family.

The protein resides in the cytoplasm. The enzyme catalyses GMP + ATP = GDP + ADP. Its function is as follows. Essential for recycling GMP and indirectly, cGMP. The polypeptide is Guanylate kinase (gmk) (Rickettsia prowazekii (strain Madrid E)).